Here is a 178-residue protein sequence, read N- to C-terminus: uncharacterized protein (178 aa).

2 disordered regions span residues 89 to 115 and 136 to 178; these read NEEQ…RLSI and DMPT…EIKA. The segment covering 98-109 has biased composition (low complexity); that stretch reads ASHGSTSSATST. The segment covering 167 to 178 has biased composition (acidic residues); the sequence is DSDEEEEEEIKA.

The protein resides in the cytoplasm. Its subcellular location is the nucleus. This is an uncharacterized protein from Schizosaccharomyces pombe (strain 972 / ATCC 24843) (Fission yeast).